Here is a 504-residue protein sequence, read N- to C-terminus: Pre-mRNA-processing factor 19 (504 aa).

The residue at position 2 (Ser2) is an N-acetylserine. Residues Ser2–Ala73 form the U-box domain. The interval Ala68–Gly223 is may mediate interaction with PSMC5. Residues Lys122, Lys179, Lys244, and Lys261 each carry the N6-acetyllysine modification. The WD 1 repeat unit spans residues Ala219 to Thr259. WD repeat units lie at residues Gly262 to Val301, Ala304 to Thr345, Thr348 to Asn387, Gly390 to Thr429, Asp433 to Thr472, and Glu473 to Ser503.

It belongs to the WD repeat PRP19 family. Homotetramer. Component of activated, catalytic and post-catalytic spliceosomes. Component of the Prp19 complex/PRP19C/Nineteen complex/NTC and related complexes described as PRP19-CDC5L splicing complex and PSO4 complex. A homotetramer of PRPF19, CDC5L, PLRG1 and BCAS2 constitute the core of those complexes. The interaction with CDC5L, PLRG1 and BCAS2 is direct within this core complex. At least three less stably associated proteins CTNNBL1, CWC15 and HSPA8 are found in the Prp19 complex. The Prp19 complex associates with the spliceosome during its assembly and remodeling recruiting additional proteins. Component of the XAB2 complex, a multimeric protein complex composed of XAB2, PRPF19, AQR, ZNF830, ISY1, and PPIE. Interacts with CWC22 and EIF4A3 in an RNA-independent manner. Interacts with RPA1 and RPA2; the PRP19-CDC5L complex is recruited to the sites of DNA repair where it interacts with the replication protein A complex (RPA). Interacts with SETMAR; required for SETMAR recruitment to site of DNA damage. Interacts with U2AF2; the interaction is direct and recruits the Prp19 complex to RNA polymerase II C-terminal domain (CTD) and the pre-mRNA. Interacts with PRPF3. Interacts with APEX1, DNTT and PSMB4. Interacts with PSMC5. Interacts with KNSTRN. Interacts (via N-terminus) with CDC5L. Interacts with KHDC4. Interacts with USB1. Interacts with DDX41.

The protein localises to the nucleus. It is found in the nucleoplasm. The protein resides in the cytoplasm. Its subcellular location is the cytoskeleton. It localises to the spindle. The protein localises to the lipid droplet. It carries out the reaction S-ubiquitinyl-[E2 ubiquitin-conjugating enzyme]-L-cysteine + [acceptor protein]-L-lysine = [E2 ubiquitin-conjugating enzyme]-L-cysteine + N(6)-ubiquitinyl-[acceptor protein]-L-lysine.. It functions in the pathway protein modification; protein ubiquitination. In terms of biological role, ubiquitin-protein ligase which is a core component of several complexes mainly involved pre-mRNA splicing and DNA repair. Required for pre-mRNA splicing as component of the spliceosome. Core component of the PRP19C/Prp19 complex/NTC/Nineteen complex which is part of the spliceosome and participates in its assembly, its remodeling and is required for its activity. During assembly of the spliceosome, mediates 'Lys-63'-linked polyubiquitination of the U4 spliceosomal protein PRPF3. Ubiquitination of PRPF3 allows its recognition by the U5 component PRPF8 and stabilizes the U4/U5/U6 tri-snRNP spliceosomal complex. Recruited to RNA polymerase II C-terminal domain (CTD) and the pre-mRNA, it may also couple the transcriptional and spliceosomal machineries. The XAB2 complex, which contains PRPF19, is also involved in pre-mRNA splicing, transcription and transcription-coupled repair. Beside its role in pre-mRNA splicing PRPF19, as part of the PRP19-CDC5L complex, plays a role in the DNA damage response/DDR. It is recruited to the sites of DNA damage by the RPA complex where PRPF19 directly ubiquitinates RPA1 and RPA2. 'Lys-63'-linked polyubiquitination of the RPA complex allows the recruitment of the ATR-ATRIP complex and the activation of ATR, a master regulator of the DNA damage response. May also play a role in DNA double-strand break (DSB) repair by recruiting the repair factor SETMAR to altered DNA. As part of the PSO4 complex may also be involved in the DNA interstrand cross-links/ICLs repair process. In addition, may also mediate 'Lys-48'-linked polyubiquitination of substrates and play a role in proteasomal degradation. May play a role in the biogenesis of lipid droplets. May play a role in neural differentiation possibly through its function as part of the spliceosome. The sequence is that of Pre-mRNA-processing factor 19 (PRPF19) from Bos taurus (Bovine).